Here is a 238-residue protein sequence, read N- to C-terminus: Ribonuclease 3 (238 aa).

The RNase III domain maps to 11–136; sequence RARLEAAIGY…LIAAIYLDGG (126 aa). Position 49 (Glu49) interacts with Mg(2+). Residue Asp53 is part of the active site. Residues Asp122 and Glu125 each coordinate Mg(2+). Glu125 is an active-site residue. Positions 161-230 constitute a DRBM domain; it reads DAKTELQEWA…AMKLLEREGV (70 aa). Basic and acidic residues predominate over residues 180–193; sequence YRTEDRSGPDHDPR. The tract at residues 180-215 is disordered; that stretch reads YRTEDRSGPDHDPRFTVTVEVDGIDPETGVDRSKRG.

This sequence belongs to the ribonuclease III family. Homodimer. The cofactor is Mg(2+).

The protein resides in the cytoplasm. It catalyses the reaction Endonucleolytic cleavage to 5'-phosphomonoester.. Its function is as follows. Digests double-stranded RNA. Involved in the processing of primary rRNA transcript to yield the immediate precursors to the large and small rRNAs (23S and 16S). Processes some mRNAs, and tRNAs when they are encoded in the rRNA operon. Processes pre-crRNA and tracrRNA of type II CRISPR loci if present in the organism. The protein is Ribonuclease 3 of Sinorhizobium medicae (strain WSM419) (Ensifer medicae).